The chain runs to 211 residues: Probable nicotinate-nucleotide adenylyltransferase (211 aa).

This sequence belongs to the NadD family.

The catalysed reaction is nicotinate beta-D-ribonucleotide + ATP + H(+) = deamido-NAD(+) + diphosphate. It functions in the pathway cofactor biosynthesis; NAD(+) biosynthesis; deamido-NAD(+) from nicotinate D-ribonucleotide: step 1/1. Its function is as follows. Catalyzes the reversible adenylation of nicotinate mononucleotide (NaMN) to nicotinic acid adenine dinucleotide (NaAD). The chain is Probable nicotinate-nucleotide adenylyltransferase from Desulfotalea psychrophila (strain LSv54 / DSM 12343).